The following is a 240-amino-acid chain: Uridylate kinase (240 aa).

Residue 13-16 (KLSG) participates in ATP binding. Residues 21 to 26 (GEKGFG) are involved in allosteric activation by GTP. Position 55 (glycine 55) interacts with UMP. 2 residues coordinate ATP: glycine 56 and arginine 60. Residues aspartate 75 and 136–143 (IGNPYFST) contribute to the UMP site. The ATP site is built by asparagine 164, tyrosine 170, and aspartate 173.

The protein belongs to the UMP kinase family. Homohexamer.

Its subcellular location is the cytoplasm. It catalyses the reaction UMP + ATP = UDP + ADP. It participates in pyrimidine metabolism; CTP biosynthesis via de novo pathway; UDP from UMP (UMPK route): step 1/1. Its activity is regulated as follows. Allosterically activated by GTP. Inhibited by UTP. Its function is as follows. Catalyzes the reversible phosphorylation of UMP to UDP. The chain is Uridylate kinase from Staphylococcus aureus (strain USA300).